We begin with the raw amino-acid sequence, 122 residues long: Ribonuclease P protein component (122 aa).

This sequence belongs to the RnpA family. As to quaternary structure, consists of a catalytic RNA component (M1 or rnpB) and a protein subunit.

The enzyme catalyses Endonucleolytic cleavage of RNA, removing 5'-extranucleotides from tRNA precursor.. RNaseP catalyzes the removal of the 5'-leader sequence from pre-tRNA to produce the mature 5'-terminus. It can also cleave other RNA substrates such as 4.5S RNA. The protein component plays an auxiliary but essential role in vivo by binding to the 5'-leader sequence and broadening the substrate specificity of the ribozyme. This Halorhodospira halophila (strain DSM 244 / SL1) (Ectothiorhodospira halophila (strain DSM 244 / SL1)) protein is Ribonuclease P protein component.